The chain runs to 256 residues: MRHSPRKRFGQNFLQDKYIINEILRAINPLADDNMLEIGPGLGALTQPLLQKLNRLTAIEIDTDLQSYLTCLPVSQGKLNLIPADALTVDFCQFGPHLRVVGNLPYNISTPLLIYLLKFITCIDDMHFMLQKEVVERIAAAHGTKAYGRLSVMLQYHCEVEYLFDVPPEAFEPRPKVDSAIVRLTPHRVSPFESVNTEKLENIVAKAFAMRRKTLTNNLKGIISLSQLNDLGIDGGKRPEQISVAEYVQLAKFISN.

Positions 12, 14, 39, 60, 85, and 103 each coordinate S-adenosyl-L-methionine.

It belongs to the class I-like SAM-binding methyltransferase superfamily. rRNA adenine N(6)-methyltransferase family. RsmA subfamily.

The protein resides in the cytoplasm. It catalyses the reaction adenosine(1518)/adenosine(1519) in 16S rRNA + 4 S-adenosyl-L-methionine = N(6)-dimethyladenosine(1518)/N(6)-dimethyladenosine(1519) in 16S rRNA + 4 S-adenosyl-L-homocysteine + 4 H(+). Specifically dimethylates two adjacent adenosines (A1518 and A1519) in the loop of a conserved hairpin near the 3'-end of 16S rRNA in the 30S particle. May play a critical role in biogenesis of 30S subunits. The sequence is that of Ribosomal RNA small subunit methyltransferase A from Legionella pneumophila (strain Lens).